A 203-amino-acid polypeptide reads, in one-letter code: Probable cytochrome c oxidase subunit 3 (203 aa).

Helical transmembrane passes span 30-50, 69-89, 102-122, 142-162, and 179-199; these read IIWL…YFVA, LAVP…MGVF, WYFI…YEYY, ITTG…VFLL, and IVVS…FATI.

It belongs to the cytochrome c oxidase subunit 3 family.

The protein resides in the cell membrane. It catalyses the reaction 4 Fe(II)-[cytochrome c] + O2 + 8 H(+)(in) = 4 Fe(III)-[cytochrome c] + 2 H2O + 4 H(+)(out). This is Probable cytochrome c oxidase subunit 3 (ctaE) from Nocardia farcinica (strain IFM 10152).